The following is a 107-amino-acid chain: Acidic phospholipase A2 braziliase-I (107 aa).

Cystine bridges form between cysteine 26–cysteine 100, cysteine 28–cysteine 44, cysteine 43–cysteine 86, cysteine 49–cysteine 107, cysteine 50–cysteine 79, cysteine 57–cysteine 72, and cysteine 66–cysteine 77. Positions 27, 29, and 31 each coordinate Ca(2+). The active site involves histidine 47. Residue aspartate 48 coordinates Ca(2+). Residue aspartate 80 is part of the active site.

Monomer. Requires Ca(2+) as cofactor. In terms of tissue distribution, expressed by the venom gland.

The protein resides in the secreted. It catalyses the reaction a 1,2-diacyl-sn-glycero-3-phosphocholine + H2O = a 1-acyl-sn-glycero-3-phosphocholine + a fatty acid + H(+). Its function is as follows. Snake venom phospholipase A2 (PLA2) that induces significant edematogenic activity. Shows mild cytotoxicity on Trypanosoma cruzi and Leishmania infantum. Also inhibits ADP- and collagen-induced platelet aggregation. Does not show myotoxic activity. In Bothrops brazili (Brazil's lancehead), this protein is Acidic phospholipase A2 braziliase-I.